Reading from the N-terminus, the 213-residue chain is Protein GrpE (213 aa).

The segment at 1–61 is disordered; it reads MEQGEKQVME…AEKAPTAEEL (61 aa). Acidic residues predominate over residues 13-35; the sequence is TYDEPEREQPIEEEAAPQPEEES.

Belongs to the GrpE family. Homodimer.

It localises to the cytoplasm. Functionally, participates actively in the response to hyperosmotic and heat shock by preventing the aggregation of stress-denatured proteins, in association with DnaK and GrpE. It is the nucleotide exchange factor for DnaK and may function as a thermosensor. Unfolded proteins bind initially to DnaJ; upon interaction with the DnaJ-bound protein, DnaK hydrolyzes its bound ATP, resulting in the formation of a stable complex. GrpE releases ADP from DnaK; ATP binding to DnaK triggers the release of the substrate protein, thus completing the reaction cycle. Several rounds of ATP-dependent interactions between DnaJ, DnaK and GrpE are required for fully efficient folding. The protein is Protein GrpE of Geobacillus kaustophilus (strain HTA426).